The chain runs to 201 residues: Ribonuclease HII (201 aa).

An RNase H type-2 domain is found at 15–201; sequence QRVAGVDEVG…FRPVRRFLEA (187 aa). The a divalent metal cation site is built by Asp21, Glu22, and Asp113.

This sequence belongs to the RNase HII family. The cofactor is Mn(2+). Requires Mg(2+) as cofactor.

The protein resides in the cytoplasm. It carries out the reaction Endonucleolytic cleavage to 5'-phosphomonoester.. In terms of biological role, endonuclease that specifically degrades the RNA of RNA-DNA hybrids. The polypeptide is Ribonuclease HII (Nitrosococcus oceani (strain ATCC 19707 / BCRC 17464 / JCM 30415 / NCIMB 11848 / C-107)).